A 44-amino-acid chain; its full sequence is uncharacterized protein (44 aa).

This is an uncharacterized protein from Escherichia coli (strain K12).